The following is a 419-amino-acid chain: 3-isopropylmalate dehydratase large subunit (419 aa).

3 residues coordinate [4Fe-4S] cluster: Cys-300, Cys-360, and Cys-363.

It belongs to the aconitase/IPM isomerase family. LeuC type 2 subfamily. In terms of assembly, heterodimer of LeuC and LeuD. The cofactor is [4Fe-4S] cluster.

The catalysed reaction is (2R,3S)-3-isopropylmalate = (2S)-2-isopropylmalate. The protein operates within amino-acid biosynthesis; L-leucine biosynthesis; L-leucine from 3-methyl-2-oxobutanoate: step 2/4. In terms of biological role, catalyzes the isomerization between 2-isopropylmalate and 3-isopropylmalate, via the formation of 2-isopropylmaleate. The chain is 3-isopropylmalate dehydratase large subunit from Nitratidesulfovibrio vulgaris (strain ATCC 29579 / DSM 644 / CCUG 34227 / NCIMB 8303 / VKM B-1760 / Hildenborough) (Desulfovibrio vulgaris).